Consider the following 128-residue polypeptide: Small ribosomal subunit protein uS11 (128 aa).

This sequence belongs to the universal ribosomal protein uS11 family. Part of the 30S ribosomal subunit. Interacts with proteins S7 and S18. Binds to IF-3.

Located on the platform of the 30S subunit, it bridges several disparate RNA helices of the 16S rRNA. Forms part of the Shine-Dalgarno cleft in the 70S ribosome. The protein is Small ribosomal subunit protein uS11 of Ligilactobacillus salivarius (strain UCC118) (Lactobacillus salivarius).